The chain runs to 499 residues: Ribose import ATP-binding protein RbsA (499 aa).

2 ABC transporter domains span residues 3-240 and 250-494; these read VEMT…VGRA and LTPG…TGGD. 35-42 contributes to the ATP binding site; the sequence is GENGAGKS.

It belongs to the ABC transporter superfamily. Ribose importer (TC 3.A.1.2.1) family. The complex is composed of an ATP-binding protein (RbsA), two transmembrane proteins (RbsC) and a solute-binding protein (RbsB).

It is found in the cell membrane. It catalyses the reaction D-ribose(out) + ATP + H2O = D-ribose(in) + ADP + phosphate + H(+). In terms of biological role, part of the ABC transporter complex RbsABC involved in ribose import. Responsible for energy coupling to the transport system. The chain is Ribose import ATP-binding protein RbsA from Halalkalibacterium halodurans (strain ATCC BAA-125 / DSM 18197 / FERM 7344 / JCM 9153 / C-125) (Bacillus halodurans).